A 557-amino-acid polypeptide reads, in one-letter code: Hepatocyte nuclear factor 1-beta (557 aa).

A dimerization region spans residues 1 to 31; it reads MVSKLTSLQQELLSALLSSGVTKEVLIQALE. One can recognise an HNF-p1 domain in the interval 1-32; that stretch reads MVSKLTSLQQELLSALLSSGVTKEVLIQALEE. Ser-49, Ser-52, Ser-75, and Ser-80 each carry phosphoserine. Positions 66-85 are disordered; it reads TNGHAKGRLSGDEGSEDGDD. A POU-specific atypical domain is found at 93 to 188; sequence KELQALNTEE…ILRQFNQTVQ (96 aa). Positions 231–311 form a DNA-binding region, homeobox; HNF1-type; the sequence is MRRNRFKWGP…NRRKEEAFRQ (81 aa). The interval 324-370 is disordered; that stretch reads HNLNPLLTHGSPHHQPSSSPPNKLSGVRYSQPGNNEVTSSSTISHHG. Polar residues predominate over residues 354-370; it reads QPGNNEVTSSSTISHHG.

It belongs to the HNF1 homeobox family. In terms of assembly, binds DNA as a dimer. Can form homodimer or heterodimer with HNF1-alpha. Interacts (via HNF-p1 domain) with PCBD1; the interaction increases its transactivation activity. As to expression, liver, kidney and intestine.

It is found in the nucleus. Its function is as follows. Transcription factor that binds to the inverted palindrome 5'-GTTAATNATTAAC-3'. Binds to the FPC element in the cAMP regulatory unit of the PLAU gene. Transcriptional activity is increased by coactivator PCBD1. The chain is Hepatocyte nuclear factor 1-beta (Hnf1b) from Rattus norvegicus (Rat).